A 972-amino-acid polypeptide reads, in one-letter code: Translation initiation factor IF-2 (972 aa).

Basic and acidic residues predominate over residues H49 to K63. Disordered stretches follow at residues H49–I86 and D100–A383. Over residues G105 to A114 the composition is skewed to low complexity. Over residues E121–A177 the composition is skewed to basic and acidic residues. A compositionally biased stretch (low complexity) spans K178 to Q209. The segment covering D210–R261 has biased composition (basic and acidic residues). The span at P277 to P286 shows a compositional bias: pro residues. Low complexity predominate over residues K298–G327. Over residues S356–K369 the composition is skewed to gly residues. The 170-residue stretch at P472–K641 folds into the tr-type G domain. The tract at residues G481 to T488 is G1. G481–T488 lines the GTP pocket. Positions G506–H510 are G2. The interval D527 to G530 is G3. GTP is bound by residues D527–H531 and N581–D584. The G4 stretch occupies residues N581–D584. The segment at S617–K619 is G5.

It belongs to the TRAFAC class translation factor GTPase superfamily. Classic translation factor GTPase family. IF-2 subfamily.

The protein resides in the cytoplasm. Its function is as follows. One of the essential components for the initiation of protein synthesis. Protects formylmethionyl-tRNA from spontaneous hydrolysis and promotes its binding to the 30S ribosomal subunits. Also involved in the hydrolysis of GTP during the formation of the 70S ribosomal complex. In Burkholderia ambifaria (strain MC40-6), this protein is Translation initiation factor IF-2.